A 955-amino-acid chain; its full sequence is RNA polymerase-associated protein RapA (955 aa).

Positions 163 to 333 (EVGHRYAPRV…FARLRLLDPE (171 aa)) constitute a Helicase ATP-binding domain. Residue 176–183 (DEVGLGKT) participates in ATP binding. The DEAH box signature appears at 279–282 (DEAH). The Helicase C-terminal domain occupies 478–642 (RVEWLLELLL…AVRDELFELL (165 aa)).

Belongs to the SNF2/RAD54 helicase family. RapA subfamily. In terms of assembly, interacts with the RNAP. Has a higher affinity for the core RNAP than for the holoenzyme. Its ATPase activity is stimulated by binding to RNAP.

In terms of biological role, transcription regulator that activates transcription by stimulating RNA polymerase (RNAP) recycling in case of stress conditions such as supercoiled DNA or high salt concentrations. Probably acts by releasing the RNAP, when it is trapped or immobilized on tightly supercoiled DNA. Does not activate transcription on linear DNA. Probably not involved in DNA repair. The polypeptide is RNA polymerase-associated protein RapA (Aeromonas hydrophila subsp. hydrophila (strain ATCC 7966 / DSM 30187 / BCRC 13018 / CCUG 14551 / JCM 1027 / KCTC 2358 / NCIMB 9240 / NCTC 8049)).